The following is a 464-amino-acid chain: Na(+)/H(+) antiporter NhaA 2 (464 aa).

A run of 11 helical transmembrane segments spans residues 53 to 73, 96 to 116, 134 to 154, 165 to 185, 195 to 215, 219 to 239, 257 to 277, 313 to 333, 340 to 360, 378 to 398, and 412 to 432; these read VGGI…NSPW, LTLG…VVGL, ALPI…FVLV, GWAI…AVIS, FLLT…AVFY, IKAW…VCAQ, VLVH…GFAV, IAIP…LSGL, PITL…ILVT, WVDV…SLLI, and FVKI…AIVL.

It belongs to the NhaA Na(+)/H(+) (TC 2.A.33) antiporter family.

Its subcellular location is the cell membrane. The catalysed reaction is Na(+)(in) + 2 H(+)(out) = Na(+)(out) + 2 H(+)(in). In terms of biological role, na(+)/H(+) antiporter that extrudes sodium in exchange for external protons. This is Na(+)/H(+) antiporter NhaA 2 from Mycolicibacterium vanbaalenii (strain DSM 7251 / JCM 13017 / BCRC 16820 / KCTC 9966 / NRRL B-24157 / PYR-1) (Mycobacterium vanbaalenii).